We begin with the raw amino-acid sequence, 122 residues long: Large ribosomal subunit protein uL14 (122 aa).

The protein belongs to the universal ribosomal protein uL14 family. As to quaternary structure, part of the 50S ribosomal subunit. Forms a cluster with proteins L3 and L19. In the 70S ribosome, L14 and L19 interact and together make contacts with the 16S rRNA in bridges B5 and B8.

Binds to 23S rRNA. Forms part of two intersubunit bridges in the 70S ribosome. This is Large ribosomal subunit protein uL14 from Thermobifida fusca (strain YX).